Reading from the N-terminus, the 412-residue chain is Putative odorant receptor 85d (412 aa).

Topologically, residues 1 to 56 are cytoplasmic; that stretch reads MLTKKDTQSAKEQEKLKAIPLHSFLKYANVFYLSIGMMAYDHKYSQKWKEVLLHWT. A helical transmembrane segment spans residues 57-77; that stretch reads FIAQMVNLNTVLISELIYVFL. Over 78 to 84 the chain is Extracellular; it reads AIGKGSN. A helical membrane pass occupies residues 85–105; it reads FLEATMNLSFIGFVIVGDFKI. Residues 106–152 lie on the Cytoplasmic side of the membrane; sequence WNISRQRKRLTQVVSRLEELHPQGLAQQEPYNIGHHLSGYSRYSKFY. A helical membrane pass occupies residues 153–173; sequence FGMHMVLIWTYNLYWAVYYLV. Residues 174–219 lie on the Extracellular side of the membrane; it reads CDFWLGMRQFERMLPYYCWVPWDWSTGYSYYFMYISQNIGGQACLS. The chain crosses the membrane as a helical span at residues 220–240; that stretch reads GQLAADMLMCALVTLVVMHFI. The Cytoplasmic segment spans residues 241 to 282; sequence RLSAHIESHVAGIGSFQHDLEFLQATVAYHQSLIHLCQDINE. A helical transmembrane segment spans residues 283 to 303; it reads IFGVSLLSNFVSSSFIICFVG. Topologically, residues 304–314 are extracellular; sequence FQMTIGSKIDN. A helical membrane pass occupies residues 315–335; the sequence is LVMLVLFLFCAMVQVFMIATH. The Cytoplasmic segment spans residues 336–382; sequence AQRLVDASEQIGQAVYNHDWFRADLRYRKMLILIIKRAQQPSRLKAT. The chain crosses the membrane as a helical span at residues 383 to 403; the sequence is MFLNISLVTVSDLLQLSYKFF. At 404–412 the chain is on the extracellular side; it reads ALLRTMYVN.

This sequence belongs to the insect chemoreceptor superfamily. Heteromeric odorant receptor channel (TC 1.A.69) family. Or49a subfamily. Interacts with Orco. Complexes exist early in the endomembrane system in olfactory sensory neurons (OSNs), coupling these complexes to the conserved ciliary trafficking pathway. In terms of tissue distribution, expressed in olfactory sensory neurons in the maxillary palp.

Its subcellular location is the cell membrane. In terms of biological role, odorant receptor which mediates acceptance or avoidance behavior, depending on its substrates. The odorant receptor repertoire encodes a large collection of odor stimuli that vary widely in identity, intensity, and duration. May form a complex with Orco to form odorant-sensing units, providing sensitive and prolonged odorant signaling and calcium permeability. The polypeptide is Putative odorant receptor 85d (Or85d) (Drosophila melanogaster (Fruit fly)).